The following is a 306-amino-acid chain: D-alanine--D-alanine ligase (306 aa).

One can recognise an ATP-grasp domain in the interval 106–301 (KLLWQSAGIN…FEELVLKILG (196 aa)). Residue 132 to 187 (AKELGLPLIVKPSREGSTIGLSKVREAGEVAAAWHLAARHDAMVLAEQFIEGTELT) participates in ATP binding. Positions 255, 268, and 270 each coordinate Mg(2+).

The protein belongs to the D-alanine--D-alanine ligase family. Mg(2+) is required as a cofactor. The cofactor is Mn(2+).

It is found in the cytoplasm. The catalysed reaction is 2 D-alanine + ATP = D-alanyl-D-alanine + ADP + phosphate + H(+). It participates in cell wall biogenesis; peptidoglycan biosynthesis. Cell wall formation. The protein is D-alanine--D-alanine ligase of Nitrosospira multiformis (strain ATCC 25196 / NCIMB 11849 / C 71).